A 170-amino-acid chain; its full sequence is Lipoprotein signal peptidase (170 aa).

Transmembrane regions (helical) follow at residues 12 to 32 (WYWI…WVLS), 67 to 87 (WQRW…SVWL), and 94 to 113 (MWRL…GNLI). Catalysis depends on residues Asp-123 and Asp-141. Residues 133-153 (HFPAFNIADSAICIGAGLIIL) traverse the membrane as a helical segment.

The protein belongs to the peptidase A8 family.

It is found in the cell inner membrane. The catalysed reaction is Release of signal peptides from bacterial membrane prolipoproteins. Hydrolyzes -Xaa-Yaa-Zaa-|-(S,diacylglyceryl)Cys-, in which Xaa is hydrophobic (preferably Leu), and Yaa (Ala or Ser) and Zaa (Gly or Ala) have small, neutral side chains.. Its pathway is protein modification; lipoprotein biosynthesis (signal peptide cleavage). This protein specifically catalyzes the removal of signal peptides from prolipoproteins. This Shewanella piezotolerans (strain WP3 / JCM 13877) protein is Lipoprotein signal peptidase.